Reading from the N-terminus, the 61-residue chain is Potassium channel toxin alpha-KTx 6.8 (61 aa).

The N-terminal stretch at 1-23 (MNAKFILLLLVVTTTILLPDTQG) is a signal peptide. 4 cysteine pairs are disulfide-bonded: Cys29-Cys50, Cys35-Cys55, Cys39-Cys57, and Cys45-Cys60. Cys60 is modified (cysteine amide).

This sequence belongs to the short scorpion toxin superfamily. Potassium channel inhibitor family. Alpha-KTx 06 subfamily. As to expression, expressed by the venom gland.

The protein localises to the secreted. In terms of biological role, blocker of voltage-gated potassium channels. In Opistophthalmus carinatus (African yellow leg scorpion), this protein is Potassium channel toxin alpha-KTx 6.8.